The sequence spans 64 residues: Translation machinery-associated protein 7 homolog (64 aa).

Positions 1–64 are disordered; it reads MSGREGGKKK…QGGIKKSGKK (64 aa). Residues 21–50 are a coiled coil; the sequence is EMDEDTAAFKAKQKEQQKALEAAKQKATKG. Positions 32–44 are enriched in basic and acidic residues; that stretch reads KQKEQQKALEAAK.

It belongs to the TMA7 family.

In Anopheles gambiae (African malaria mosquito), this protein is Translation machinery-associated protein 7 homolog.